Here is a 95-residue protein sequence, read N- to C-terminus: MVREAAMLHIKEGLEQEFEDAFRQAAPIISGMKGYITHSLSKCMEETHKYLLLVEWETLEDHTEGFRGSSEYQEWKALLHRFYTPFPTVEHFQDV.

One can recognise an ABM domain in the interval 2–92 (VREAAMLHIK…YTPFPTVEHF (91 aa)).

This is an uncharacterized protein from Bacillus subtilis (strain 168).